Consider the following 269-residue polypeptide: Undecaprenyl-diphosphatase (269 aa).

7 helical membrane-spanning segments follow: residues 41-61 (FATM…VFHY), 78-98 (GFNL…IGLL), 107-127 (LFSP…MIVI), 148-167 (SLLI…SRSA), 184-204 (AEFS…LSLL), 213-233 (LEWQ…LFVV), and 248-268 (FAYY…EKIV).

The protein belongs to the UppP family.

The protein resides in the cell membrane. It catalyses the reaction di-trans,octa-cis-undecaprenyl diphosphate + H2O = di-trans,octa-cis-undecaprenyl phosphate + phosphate + H(+). Functionally, catalyzes the dephosphorylation of undecaprenyl diphosphate (UPP). Confers resistance to bacitracin. This chain is Undecaprenyl-diphosphatase, found in Thermoanaerobacter pseudethanolicus (strain ATCC 33223 / 39E) (Clostridium thermohydrosulfuricum).